A 1019-amino-acid polypeptide reads, in one-letter code: Type VI secretion system spike protein VgrG2b (1019 aa).

A disordered region spans residues 268 to 291 (AGRPFTESRLRGHRRDARVASVSG). H935 provides a ligand contact to Zn(2+). E936 is an active-site residue. H939 and E983 together coordinate Zn(2+).

Belongs to the VgrG protein family. Interacts with Tla3; this interaction promotes Tle3 loading onto VgrG2b. Interacts with host gamma-tubulin ring complex components GCP1 and GCP4. The cofactor is Zn(2+).

It localises to the secreted. Its function is as follows. Part of the H2 type VI secretion system (H2-T6SS) specialized secretion system, which delivers several virulence factors in both prokaryotic and eukaryotic cells during infection. Forms the spike at the tip of the elongating tube probably formed by haemolysin co-regulated protein 2b/Hcp2b. Allows the delivery of the Tle3 antibacterial toxin to target cells where it exerts its toxicity. Additionally, acts directly as an effector and promotes internalization by interacting with the host gamma-tubulin ring complex. Elicits toxicity also in the bacterial periplasm and disrupts bacterial cell morphology. Toxicity is counteracted by a cognate immunity protein. This Pseudomonas aeruginosa (strain ATCC 15692 / DSM 22644 / CIP 104116 / JCM 14847 / LMG 12228 / 1C / PRS 101 / PAO1) protein is Type VI secretion system spike protein VgrG2b (vgrG2b).